We begin with the raw amino-acid sequence, 62 residues long: Small ribosomal subunit protein bS21 (62 aa).

Residues 43 to 52 (VKKKLKSEAA) are compositionally biased toward basic and acidic residues. A disordered region spans residues 43 to 62 (VKKKLKSEAARKRKAKKKRF). Positions 53-62 (RKRKAKKKRF) are enriched in basic residues.

This sequence belongs to the bacterial ribosomal protein bS21 family.

The sequence is that of Small ribosomal subunit protein bS21 from Levilactobacillus brevis (strain ATCC 367 / BCRC 12310 / CIP 105137 / JCM 1170 / LMG 11437 / NCIMB 947 / NCTC 947) (Lactobacillus brevis).